Consider the following 371-residue polypeptide: 4-hydroxyphenylpyruvate dioxygenase-like protein (371 aa).

VOC domains lie at 7-135 (RLCH…LLER) and 160-328 (RVDH…VFTK). Fe cation contacts are provided by His163, His258, and Glu339.

This sequence belongs to the 4HPPD family. Fe cation serves as cofactor.

The protein resides in the mitochondrion. It carries out the reaction 3-(4-hydroxyphenyl)pyruvate + O2 = (S)-4-hydroxymandelate + CO2. Its function is as follows. Iron-dependent dioxygenase that catalyzes the conversion of 4-hydroxyphenylpyruvate (4-HPPA) to 4-hydroxymandelate (4-HMA) in the mitochondria, one of the steps in the biosynthesis of coenzyme Q10 from tyrosine. The polypeptide is 4-hydroxyphenylpyruvate dioxygenase-like protein (Homo sapiens (Human)).